We begin with the raw amino-acid sequence, 79 residues long: MAHKQIYYSDKYFDEHYEYRHVMLPRELSKQVPKTHLMSEEEWRRLGVQQSLGWVHYMIHEPEPHILLFRRPLPKEQQK.

At lysine 4 the chain carries N6-acetyllysine.

This sequence belongs to the CKS family. As to quaternary structure, forms a homohexamer that can probably bind six kinase subunits.

Its function is as follows. Binds to the catalytic subunit of the cyclin dependent kinases and is essential for their biological function. This is Cyclin-dependent kinases regulatory subunit 2 (Cks2) from Mus musculus (Mouse).